We begin with the raw amino-acid sequence, 133 residues long: Phosphoribosyl-AMP cyclohydrolase (133 aa).

Residue Asp-77 participates in Mg(2+) binding. Cys-78 contacts Zn(2+). 2 residues coordinate Mg(2+): Asp-79 and Asp-81. Zn(2+)-binding residues include Cys-95 and Cys-102.

Belongs to the PRA-CH family. As to quaternary structure, homodimer. It depends on Mg(2+) as a cofactor. Zn(2+) serves as cofactor.

The protein localises to the cytoplasm. The catalysed reaction is 1-(5-phospho-beta-D-ribosyl)-5'-AMP + H2O = 1-(5-phospho-beta-D-ribosyl)-5-[(5-phospho-beta-D-ribosylamino)methylideneamino]imidazole-4-carboxamide. Its pathway is amino-acid biosynthesis; L-histidine biosynthesis; L-histidine from 5-phospho-alpha-D-ribose 1-diphosphate: step 3/9. Functionally, catalyzes the hydrolysis of the adenine ring of phosphoribosyl-AMP. The sequence is that of Phosphoribosyl-AMP cyclohydrolase from Thiobacillus denitrificans (strain ATCC 25259 / T1).